Reading from the N-terminus, the 436-residue chain is Aminotransferase tdiD (436 aa).

The substrate site is built by arginine 30, tyrosine 86, tyrosine 148, and asparagine 202. Lysine 270 carries the N6-(pyridoxal phosphate)lysine modification. Position 407 (arginine 407) interacts with substrate.

Belongs to the class-I pyridoxal-phosphate-dependent aminotransferase family. Requires pyridoxal 5'-phosphate as cofactor.

The enzyme catalyses 3-phenylpyruvate + L-tryptophan = indole-3-pyruvate + L-phenylalanine. It functions in the pathway secondary metabolite biosynthesis. In terms of biological role, aminotransferase; part of the gene cluster that mediates the biosynthesis of terrequinone A, an antitumor agent. The first step in the biosynthetic pathway for terrequinone A is formation of indole pyruvic acid (IPA) from L-tryptophan by the aminotransferase tdiD. The nonribosomal peptide synthase tdiA then immediately converts unstable IPA to didemethylasterriquinone D (DDAQ D), via condensation of 2 IPA molecules. The symmetric connectivity of the 2 IPA molecules is thought to arise by head-to-tail dual Claisen condensations facilitated by the TE domain. TdiB then catalyzes reverse prenylation by transferring dimethylallyl diphosphate to carbon atom 2' of DDAQ D, to yield asterriquinone C-1. Finally, tdiC and tdiE enzymes robustly convert asterriquinone C-1 to terrequinone A via a transformation involving regular prenylation at carbon atom 5, which requires elimination of the hydroxy group on C-5. The sequence is that of Aminotransferase tdiD from Emericella nidulans (strain FGSC A4 / ATCC 38163 / CBS 112.46 / NRRL 194 / M139) (Aspergillus nidulans).